The following is a 301-amino-acid chain: Putative S-adenosyl-L-methionine-dependent methyltransferase MMAR_4850 (301 aa).

S-adenosyl-L-methionine contacts are provided by residues Asp127 and 156–157 (DL).

This sequence belongs to the UPF0677 family.

In terms of biological role, exhibits S-adenosyl-L-methionine-dependent methyltransferase activity. In Mycobacterium marinum (strain ATCC BAA-535 / M), this protein is Putative S-adenosyl-L-methionine-dependent methyltransferase MMAR_4850.